The chain runs to 122 residues: Modulator protein MzrA (122 aa).

At 1–10 the chain is on the cytoplasmic side; it reads MKILTRIPRR. Residues 11–31 form a helical membrane-spanning segment; it reads LLPWLLGGALALVAVSFAPAL. Topologically, residues 32–122 are periplasmic; that stretch reads LSHETVVQIR…NQDANRSIYS (91 aa).

Belongs to the MzrA family. In terms of assembly, interacts with EnvZ.

It is found in the cell inner membrane. Modulates the activity of the EnvZ/OmpR two-component regulatory system, probably by directly modulating EnvZ enzymatic activity and increasing stability of phosphorylated OmpR. The polypeptide is Modulator protein MzrA (Pantoea sp. (strain At-9b)).